The following is a 370-amino-acid chain: MQFELDNTDGKARRGRLKFDRGIVETPAFMPVGTYGTVKGMTPEELDETGAHICLGNTFHLMLRPGTEIIKQHGDLHDFMHWQKPILTDSGGFQVFSLGDLRKITEEGVTFRSPINGEKILLTPEKSMQVQRDLGSDIVMIFDECTPHPATESEARQSMELSLRWAKRSKAEHGDNPSALFGIIQGGMYEGLRDVSLKGLEDIGFDGYAIGGLSVGEPKEDMIRILDHTTDKIPAHKPRYLMGVGKPEDLVEGVRRGVDMFDCVMPTRNARNGHLFVTSGIVKIRNAAHKTDTSPLDDKCDCYTCKNYSRSYLHHLDKCNEILGARLNTIHNLRYYQRVMQGLRDAIAEQKLDEFVADFYAQKDMPVPAL.

Aspartate 89 functions as the Proton acceptor in the catalytic mechanism. Residues aspartate 89 to phenylalanine 93, aspartate 143, glutamine 185, and glycine 212 contribute to the substrate site. Residues glycine 243 to aspartate 249 form an RNA binding region. The active-site Nucleophile is the aspartate 262. The segment at threonine 267–arginine 271 is RNA binding; important for wobble base 34 recognition. Zn(2+)-binding residues include cysteine 300, cysteine 302, cysteine 305, and histidine 331.

Belongs to the queuine tRNA-ribosyltransferase family. In terms of assembly, homodimer. Within each dimer, one monomer is responsible for RNA recognition and catalysis, while the other monomer binds to the replacement base PreQ1. Requires Zn(2+) as cofactor.

It catalyses the reaction 7-aminomethyl-7-carbaguanine + guanosine(34) in tRNA = 7-aminomethyl-7-carbaguanosine(34) in tRNA + guanine. It participates in tRNA modification; tRNA-queuosine biosynthesis. Functionally, catalyzes the base-exchange of a guanine (G) residue with the queuine precursor 7-aminomethyl-7-deazaguanine (PreQ1) at position 34 (anticodon wobble position) in tRNAs with GU(N) anticodons (tRNA-Asp, -Asn, -His and -Tyr). Catalysis occurs through a double-displacement mechanism. The nucleophile active site attacks the C1' of nucleotide 34 to detach the guanine base from the RNA, forming a covalent enzyme-RNA intermediate. The proton acceptor active site deprotonates the incoming PreQ1, allowing a nucleophilic attack on the C1' of the ribose to form the product. After dissociation, two additional enzymatic reactions on the tRNA convert PreQ1 to queuine (Q), resulting in the hypermodified nucleoside queuosine (7-(((4,5-cis-dihydroxy-2-cyclopenten-1-yl)amino)methyl)-7-deazaguanosine). The polypeptide is Queuine tRNA-ribosyltransferase (Pseudoalteromonas atlantica (strain T6c / ATCC BAA-1087)).